The primary structure comprises 331 residues: Homoserine O-succinyltransferase (331 aa).

Catalysis depends on cysteine 141, which acts as the Acyl-thioester intermediate. Substrate contacts are provided by lysine 162 and serine 190. Histidine 233 acts as the Proton acceptor in catalysis. Glutamate 235 is a catalytic residue. Arginine 247 serves as a coordination point for substrate.

This sequence belongs to the MetA family.

The protein resides in the cytoplasm. It catalyses the reaction L-homoserine + succinyl-CoA = O-succinyl-L-homoserine + CoA. Its pathway is amino-acid biosynthesis; L-methionine biosynthesis via de novo pathway; O-succinyl-L-homoserine from L-homoserine: step 1/1. Transfers a succinyl group from succinyl-CoA to L-homoserine, forming succinyl-L-homoserine. In Methylorubrum extorquens (strain DSM 6343 / CIP 106787 / DM4) (Methylobacterium extorquens), this protein is Homoserine O-succinyltransferase.